Here is a 283-residue protein sequence, read N- to C-terminus: NAD kinase (283 aa).

Asp69 acts as the Proton acceptor in catalysis. NAD(+)-binding positions include 69 to 70 (DG), 138 to 139 (NE), Lys166, Asp168, Leu176, 179 to 184 (TAYNLS), and Gln235.

It belongs to the NAD kinase family. A divalent metal cation is required as a cofactor.

Its subcellular location is the cytoplasm. The catalysed reaction is NAD(+) + ATP = ADP + NADP(+) + H(+). Its function is as follows. Involved in the regulation of the intracellular balance of NAD and NADP, and is a key enzyme in the biosynthesis of NADP. Catalyzes specifically the phosphorylation on 2'-hydroxyl of the adenosine moiety of NAD to yield NADP. The sequence is that of NAD kinase from Helicobacter acinonychis (strain Sheeba).